A 196-amino-acid chain; its full sequence is dITP/XTP pyrophosphatase (196 aa).

Residue 10 to 15 (TTNPHK) coordinates substrate. The active-site Proton acceptor is Asp-68. Asp-68 lines the Mg(2+) pocket. Substrate-binding positions include Ser-69, 148–151 (FGYD), and 175–176 (HR).

Belongs to the HAM1 NTPase family. In terms of assembly, homodimer. The cofactor is Mg(2+).

It catalyses the reaction XTP + H2O = XMP + diphosphate + H(+). The catalysed reaction is dITP + H2O = dIMP + diphosphate + H(+). It carries out the reaction ITP + H2O = IMP + diphosphate + H(+). Its function is as follows. Pyrophosphatase that catalyzes the hydrolysis of nucleoside triphosphates to their monophosphate derivatives, with a high preference for the non-canonical purine nucleotides XTP (xanthosine triphosphate), dITP (deoxyinosine triphosphate) and ITP. Seems to function as a house-cleaning enzyme that removes non-canonical purine nucleotides from the nucleotide pool, thus preventing their incorporation into DNA/RNA and avoiding chromosomal lesions. This is dITP/XTP pyrophosphatase from Thermotoga maritima (strain ATCC 43589 / DSM 3109 / JCM 10099 / NBRC 100826 / MSB8).